A 517-amino-acid chain; its full sequence is Acetyl-coenzyme A carboxylase carboxyl transferase subunit beta, chloroplastic (517 aa).

Basic and acidic residues-rich tracts occupy residues 1–17 (MKPT…KSNE), 24–41 (GDNK…KSNE), 48–65 (GDNK…KSNE), and 72–81 (GDKQKDKKDG). Disordered regions lie at residues 1-179 (MKPT…KEEE) and 204-234 (KHRD…DSEA). Residues 87 to 131 (YDDEYEEDLEYDDEYEEDLEYDDEYEEDLEYDDEEYDDEYEEDLE) are compositionally biased toward acidic residues. Basic and acidic residues-rich tracts occupy residues 132-179 (GDNK…KEEE) and 209-229 (KSVP…RDTD). In terms of domain architecture, CoA carboxyltransferase N-terminal spans 243–514 (LWVHCKLCSG…NSQVINIYNY (272 aa)). Residues Cys247, Cys250, Cys266, and Cys269 each contribute to the Zn(2+) site. The C4-type zinc-finger motif lies at 247–269 (CKLCSGFNYKKILKSKNNVCEQC).

The protein belongs to the AccD/PCCB family. In terms of assembly, acetyl-CoA carboxylase is a heterohexamer composed of biotin carboxyl carrier protein, biotin carboxylase and 2 subunits each of ACCase subunit alpha and ACCase plastid-coded subunit beta (accD). The cofactor is Zn(2+).

The protein resides in the plastid. The protein localises to the chloroplast stroma. The catalysed reaction is N(6)-carboxybiotinyl-L-lysyl-[protein] + acetyl-CoA = N(6)-biotinyl-L-lysyl-[protein] + malonyl-CoA. The protein operates within lipid metabolism; malonyl-CoA biosynthesis; malonyl-CoA from acetyl-CoA: step 1/1. Functionally, component of the acetyl coenzyme A carboxylase (ACC) complex. Biotin carboxylase (BC) catalyzes the carboxylation of biotin on its carrier protein (BCCP) and then the CO(2) group is transferred by the transcarboxylase to acetyl-CoA to form malonyl-CoA. The sequence is that of Acetyl-coenzyme A carboxylase carboxyl transferase subunit beta, chloroplastic from Oenothera elata subsp. hookeri (Hooker's evening primrose).